Reading from the N-terminus, the 330-residue chain is ADP-L-glycero-D-manno-heptose-6-epimerase (330 aa).

Residues 11–12 (FI), 32–33 (DN), K39, K54, 75–79 (EGACS), and N92 each bind NADP(+). The active-site Proton acceptor is Y139. K143 provides a ligand contact to NADP(+). Substrate is bound at residue N168. V169 and K177 together coordinate NADP(+). K177 functions as the Proton acceptor in the catalytic mechanism. Substrate is bound by residues R179, H186, 200–203 (FGEY), R213, and Y292.

This sequence belongs to the NAD(P)-dependent epimerase/dehydratase family. HldD subfamily. Homopentamer. It depends on NADP(+) as a cofactor.

It carries out the reaction ADP-D-glycero-beta-D-manno-heptose = ADP-L-glycero-beta-D-manno-heptose. It participates in nucleotide-sugar biosynthesis; ADP-L-glycero-beta-D-manno-heptose biosynthesis; ADP-L-glycero-beta-D-manno-heptose from D-glycero-beta-D-manno-heptose 7-phosphate: step 4/4. In terms of biological role, catalyzes the interconversion between ADP-D-glycero-beta-D-manno-heptose and ADP-L-glycero-beta-D-manno-heptose via an epimerization at carbon 6 of the heptose. This chain is ADP-L-glycero-D-manno-heptose-6-epimerase, found in Burkholderia cenocepacia (strain HI2424).